A 312-amino-acid chain; its full sequence is Olfactory receptor 10C1 (312 aa).

Topologically, residues 1–24 (MSANTSMVTEFLLLGFSHLADLQG) are extracellular. Asn4 carries N-linked (GlcNAc...) asparagine glycosylation. A helical transmembrane segment spans residues 25–45 (LLFSVFLTIYLLTVAGNFLIV). The Cytoplasmic portion of the chain corresponds to 46–53 (VLVSTDAA). The chain crosses the membrane as a helical span at residues 54-74 (LQSPMYFFLRTLSALEIGYTS). Topologically, residues 75–98 (VTVPLLLHHLLTGRRHISRSGCAL) are extracellular. An intrachain disulfide couples Cys96 to Cys188. The helical transmembrane segment at 99–119 (QMFFFLFFGATECCLLAAMAY) threads the bilayer. Topologically, residues 120–138 (DRYAAICEPLRYPLLLSHR) are cytoplasmic. A helical transmembrane segment spans residues 139–159 (VCLQLAGSAWACGVLVGLGHT). At 160–196 (PFIFSLPFCGPNTIPQFFCEIQPVLQLVCGDTSLNEL) the chain is on the extracellular side. Residues 197–216 (QIILATALLILCPFGLILGS) form a helical membrane-spanning segment. Over 217–236 (YGRILVTIFRIPSVAGRRKA) the chain is Cytoplasmic. Residues 237-257 (FSTCSSHLIMVSLFYGTALFI) traverse the membrane as a helical segment. At 258-270 (YIRPKASYDPATD) the chain is on the extracellular side. A helical transmembrane segment spans residues 271–291 (PLVSLFYAVVTPILNPIIYSL). The Cytoplasmic portion of the chain corresponds to 292–312 (RNTEVKAALKRTIQKTVPMEI).

The protein belongs to the G-protein coupled receptor 1 family.

The protein localises to the cell membrane. Functionally, odorant receptor. This Homo sapiens (Human) protein is Olfactory receptor 10C1 (OR10C1).